The sequence spans 548 residues: ATP synthase subunit alpha (548 aa).

Position 172–179 (172–179) interacts with ATP; that stretch reads GDRKTGKT. Residues 526 to 548 form a disordered region; the sequence is AEAMDEADVEKESVKVRKPAPKK.

The protein belongs to the ATPase alpha/beta chains family. F-type ATPases have 2 components, CF(1) - the catalytic core - and CF(0) - the membrane proton channel. CF(1) has five subunits: alpha(3), beta(3), gamma(1), delta(1), epsilon(1). CF(0) has three main subunits: a(1), b(2) and c(9-12). The alpha and beta chains form an alternating ring which encloses part of the gamma chain. CF(1) is attached to CF(0) by a central stalk formed by the gamma and epsilon chains, while a peripheral stalk is formed by the delta and b chains.

The protein resides in the cell membrane. It carries out the reaction ATP + H2O + 4 H(+)(in) = ADP + phosphate + 5 H(+)(out). Functionally, produces ATP from ADP in the presence of a proton gradient across the membrane. The alpha chain is a regulatory subunit. The chain is ATP synthase subunit alpha from Mycolicibacterium vanbaalenii (strain DSM 7251 / JCM 13017 / BCRC 16820 / KCTC 9966 / NRRL B-24157 / PYR-1) (Mycobacterium vanbaalenii).